We begin with the raw amino-acid sequence, 206 residues long: Holliday junction branch migration complex subunit RuvA (206 aa).

Residues 1 to 64 (MIGRLHGIII…EDAQLLYGFN (64 aa)) are domain I. The domain II stretch occupies residues 65–143 (TRQERTLFRE…GWISHDLFTP (79 aa)). Positions 144–157 (YTDAAPVDHEPSLA) are flexible linker. Residues 158–206 (PADTVESEAVAALLALGYKPQQASLVVSKVIKPEMTVENVIREALRSML) are domain III.

Belongs to the RuvA family. As to quaternary structure, homotetramer. Forms an RuvA(8)-RuvB(12)-Holliday junction (HJ) complex. HJ DNA is sandwiched between 2 RuvA tetramers; dsDNA enters through RuvA and exits via RuvB. An RuvB hexamer assembles on each DNA strand where it exits the tetramer. Each RuvB hexamer is contacted by two RuvA subunits (via domain III) on 2 adjacent RuvB subunits; this complex drives branch migration. In the full resolvosome a probable DNA-RuvA(4)-RuvB(12)-RuvC(2) complex forms which resolves the HJ.

It is found in the cytoplasm. The RuvA-RuvB-RuvC complex processes Holliday junction (HJ) DNA during genetic recombination and DNA repair, while the RuvA-RuvB complex plays an important role in the rescue of blocked DNA replication forks via replication fork reversal (RFR). RuvA specifically binds to HJ cruciform DNA, conferring on it an open structure. The RuvB hexamer acts as an ATP-dependent pump, pulling dsDNA into and through the RuvAB complex. HJ branch migration allows RuvC to scan DNA until it finds its consensus sequence, where it cleaves and resolves the cruciform DNA. This chain is Holliday junction branch migration complex subunit RuvA, found in Tolumonas auensis (strain DSM 9187 / NBRC 110442 / TA 4).